Reading from the N-terminus, the 297-residue chain is Phosphatidylinositol N-acetylglucosaminyltransferase subunit C (297 aa).

4 helical membrane-spanning segments follow: residues 67–87, 88–108, 153–173, and 239–259; these read VFVV…WLFG, TGLA…GGDG, AVFM…AAIV, and AFGG…LLLF.

It belongs to the PIGC family. As to quaternary structure, component of the glycosylphosphatidylinositol-N-acetylglucosaminyltransferase (GPI-GnT) complex composed at least by PIGA, PIGC, PIGH, PIGP, PIGQ, PIGY and DPM2. Interacts with PIGQ. Interacts with the heterodimer PIGA:PIGH.

It is found in the endoplasmic reticulum membrane. It participates in glycolipid biosynthesis; glycosylphosphatidylinositol-anchor biosynthesis. Part of the glycosylphosphatidylinositol-N-acetylglucosaminyltransferase (GPI-GnT) complex that catalyzes the transfer of N-acetylglucosamine from UDP-N-acetylglucosamine to phosphatidylinositol and participates in the first step of GPI biosynthesis. This chain is Phosphatidylinositol N-acetylglucosaminyltransferase subunit C, found in Mus musculus (Mouse).